A 285-amino-acid chain; its full sequence is Ribosomal RNA small subunit methyltransferase I (285 aa).

Belongs to the methyltransferase superfamily. RsmI family.

It localises to the cytoplasm. The catalysed reaction is cytidine(1402) in 16S rRNA + S-adenosyl-L-methionine = 2'-O-methylcytidine(1402) in 16S rRNA + S-adenosyl-L-homocysteine + H(+). In terms of biological role, catalyzes the 2'-O-methylation of the ribose of cytidine 1402 (C1402) in 16S rRNA. This is Ribosomal RNA small subunit methyltransferase I from Mycobacterium tuberculosis (strain ATCC 25618 / H37Rv).